We begin with the raw amino-acid sequence, 207 residues long: N-(5'-phosphoribosyl)anthranilate isomerase (207 aa).

The protein belongs to the TrpF family.

It carries out the reaction N-(5-phospho-beta-D-ribosyl)anthranilate = 1-(2-carboxyphenylamino)-1-deoxy-D-ribulose 5-phosphate. It functions in the pathway amino-acid biosynthesis; L-tryptophan biosynthesis; L-tryptophan from chorismate: step 3/5. The chain is N-(5'-phosphoribosyl)anthranilate isomerase from Geotalea daltonii (strain DSM 22248 / JCM 15807 / FRC-32) (Geobacter daltonii).